Reading from the N-terminus, the 429-residue chain is Choline kinase A2 (429 aa).

ATP is bound by residues 82–88 (KGGMSNM), Arg111, 152–158 (EYIPSRP), and Gln257. 84–86 (GMS) lines the substrate pocket. Glu258 is a binding site for Ca(2+). Asp301 contributes to the ATP binding site. Residues Glu320 and Ile323 each coordinate Ca(2+).

It belongs to the choline/ethanolamine kinase family. As to quaternary structure, homodimer. A small proportion exists as higher oligomers. It depends on Mg(2+) as a cofactor.

The enzyme catalyses choline + ATP = phosphocholine + ADP + H(+). The catalysed reaction is ethanolamine + ATP = phosphoethanolamine + ADP + H(+). The protein operates within phospholipid metabolism; phosphatidylcholine biosynthesis; phosphocholine from choline: step 1/1. It participates in phospholipid metabolism; phosphatidylethanolamine biosynthesis; phosphatidylethanolamine from ethanolamine: step 1/3. With respect to regulation, inhibited by Ca(2+). Mild inhibition by high levels of Mg(2+)(&gt;10 mM). Functionally, catalyzes the first step in phosphatidylcholine biosynthesis. May contribute to phosphatidylethanolamine biosynthesis. Phosphorylates choline and ethanolamine but the activity is much higher with choline. This chain is Choline kinase A2, found in Caenorhabditis elegans.